We begin with the raw amino-acid sequence, 544 residues long: Chaperonin GroEL 2 (544 aa).

Residues Thr-29–Pro-32, Asp-86–Thr-90, Gly-413, Asn-479–Ala-481, and Asp-495 contribute to the ATP site.

Belongs to the chaperonin (HSP60) family. In terms of assembly, forms a cylinder of 14 subunits composed of two heptameric rings stacked back-to-back. Interacts with the co-chaperonin GroES.

The protein localises to the cytoplasm. It carries out the reaction ATP + H2O + a folded polypeptide = ADP + phosphate + an unfolded polypeptide.. In terms of biological role, together with its co-chaperonin GroES, plays an essential role in assisting protein folding. The GroEL-GroES system forms a nano-cage that allows encapsulation of the non-native substrate proteins and provides a physical environment optimized to promote and accelerate protein folding. The protein is Chaperonin GroEL 2 of Prochlorococcus marinus (strain MIT 9515).